The chain runs to 314 residues: Methionyl-tRNA formyltransferase (314 aa).

Residue 109–112 participates in (6S)-5,6,7,8-tetrahydrofolate binding; it reads SVLP.

This sequence belongs to the Fmt family.

It carries out the reaction L-methionyl-tRNA(fMet) + (6R)-10-formyltetrahydrofolate = N-formyl-L-methionyl-tRNA(fMet) + (6S)-5,6,7,8-tetrahydrofolate + H(+). Functionally, attaches a formyl group to the free amino group of methionyl-tRNA(fMet). The formyl group appears to play a dual role in the initiator identity of N-formylmethionyl-tRNA by promoting its recognition by IF2 and preventing the misappropriation of this tRNA by the elongation apparatus. The chain is Methionyl-tRNA formyltransferase from Dictyoglomus turgidum (strain DSM 6724 / Z-1310).